The following is a 348-amino-acid chain: Anthranilate phosphoribosyltransferase (348 aa).

Residues Gly87, 90 to 91, Thr95, 97 to 100, 115 to 123, and Ser127 contribute to the 5-phospho-alpha-D-ribose 1-diphosphate site; these read GD, NIST, and KHGNRSASG. Gly87 contributes to the anthranilate binding site. Ser99 serves as a coordination point for Mg(2+). Position 118 (Asn118) interacts with anthranilate. Arg173 serves as a coordination point for anthranilate. Residues Asp232 and Glu233 each coordinate Mg(2+).

The protein belongs to the anthranilate phosphoribosyltransferase family. Homodimer. Requires Mg(2+) as cofactor.

The enzyme catalyses N-(5-phospho-beta-D-ribosyl)anthranilate + diphosphate = 5-phospho-alpha-D-ribose 1-diphosphate + anthranilate. The protein operates within amino-acid biosynthesis; L-tryptophan biosynthesis; L-tryptophan from chorismate: step 2/5. In terms of biological role, catalyzes the transfer of the phosphoribosyl group of 5-phosphorylribose-1-pyrophosphate (PRPP) to anthranilate to yield N-(5'-phosphoribosyl)-anthranilate (PRA). This Synechococcus sp. (strain WH7803) protein is Anthranilate phosphoribosyltransferase.